The primary structure comprises 200 residues: Recombination protein RecR (200 aa).

Residues 60–75 form a C4-type zinc finger; the sequence is CVYCQALTEDDVCNIC. A Toprim domain is found at 83–177; the sequence is TKLCIIESML…KISRIGFGVP (95 aa).

It belongs to the RecR family.

In terms of biological role, may play a role in DNA repair. It seems to be involved in an RecBC-independent recombinational process of DNA repair. It may act with RecF and RecO. This chain is Recombination protein RecR, found in Francisella tularensis subsp. mediasiatica (strain FSC147).